A 242-amino-acid chain; its full sequence is NAD-dependent protein deacetylase (242 aa).

Residues 1 to 242 (MQQFEEVRTI…EFVEGLSSIK (242 aa)) form the Deacetylase sirtuin-type domain. 8 residues coordinate NAD(+): alanine 23, threonine 27, phenylalanine 34, arginine 35, glutamine 102, isoleucine 104, aspartate 105, and histidine 120. Phenylalanine 34 serves as a coordination point for nicotinamide. Residues isoleucine 104 and aspartate 105 each contribute to the nicotinamide site. Histidine 120 serves as the catalytic Proton acceptor. Zn(2+) is bound by residues cysteine 128, cysteine 131, cysteine 148, and cysteine 151. NAD(+) is bound by residues threonine 187, serine 188, asparagine 213, and isoleucine 231.

Belongs to the sirtuin family. Class U subfamily. Requires Zn(2+) as cofactor.

It localises to the cytoplasm. The catalysed reaction is N(6)-acetyl-L-lysyl-[protein] + NAD(+) + H2O = 2''-O-acetyl-ADP-D-ribose + nicotinamide + L-lysyl-[protein]. Functionally, NAD-dependent protein deacetylase which modulates the activities of several enzymes which are inactive in their acetylated form. The protein is NAD-dependent protein deacetylase of Bacillus anthracis.